The primary structure comprises 268 residues: Phosphatidylglycerol--prolipoprotein diacylglyceryl transferase (268 aa).

A run of 4 helical transmembrane segments spans residues 14-34, 57-77, 90-110, and 117-137; these read LGPIKIHWYGLMYLLGIFAGW, LTFYVALGVILGGRIGYIIFY, FFLWDGGMSFHGGFIGVLIAF, and IGANFFDLGEFVAPVIPIGLG. Position 140 (R140) interacts with a 1,2-diacyl-sn-glycero-3-phospho-(1'-sn-glycerol). 3 helical membrane passes run 174-194, 200-220, and 238-258; these read QLFEFFFEGVVLFSVLWLVTI, YLVLGLFMFLYGCARFICEFF, and GQILSIPMILLGAVILIAVFI.

The protein belongs to the Lgt family.

The protein localises to the cell inner membrane. The catalysed reaction is L-cysteinyl-[prolipoprotein] + a 1,2-diacyl-sn-glycero-3-phospho-(1'-sn-glycerol) = an S-1,2-diacyl-sn-glyceryl-L-cysteinyl-[prolipoprotein] + sn-glycerol 1-phosphate + H(+). It functions in the pathway protein modification; lipoprotein biosynthesis (diacylglyceryl transfer). In terms of biological role, catalyzes the transfer of the diacylglyceryl group from phosphatidylglycerol to the sulfhydryl group of the N-terminal cysteine of a prolipoprotein, the first step in the formation of mature lipoproteins. The polypeptide is Phosphatidylglycerol--prolipoprotein diacylglyceryl transferase (Francisella tularensis subsp. novicida (strain U112)).